The chain runs to 276 residues: TIMELESS-interacting protein (276 aa).

Residues 1-54 (MLEQEENGLFEIPDYEHVEDETFPPFPPPGSPERDPAEAEPDEGSGAPVPVPPK) are disordered. An interaction with TIMELESS region spans residues 64 to 140 (LDATRLTSER…KEVQTCLKRI (77 aa)). Positions 217–243 (SNSQSLENDVTVEESSTGENQEESNGL) are enriched in polar residues. A disordered region spans residues 217–276 (SNSQSLENDVTVEESSTGENQEESNGLISADGPHDVPSASTQEEGQLEAEETQLDHPNLD). Serine 219 bears the Phosphoserine mark. Threonine 233 carries the post-translational modification Phosphothreonine.

This sequence belongs to the CSM3 family. Interacts with TIMELESS, which impairs TIMELESS self-association (via N-terminus). Associates with the MCM2-7 complex. Interacts with RPA2, PRDX2.

Its subcellular location is the cytoplasm. It localises to the nucleus. In terms of biological role, plays an important role in the control of DNA replication and the maintenance of replication fork stability. Important for cell survival after DNA damage or replication stress. May be specifically required for the ATR-CHEK1 pathway in the replication checkpoint induced by hydroxyurea or ultraviolet light. Forms a complex with TIMELESS and this complex regulates DNA replication processes under both normal and stress conditions, stabilizes replication forks and influences both CHEK1 phosphorylation and the intra-S phase checkpoint in response to genotoxic stress. This Rattus norvegicus (Rat) protein is TIMELESS-interacting protein (Tipin).